The sequence spans 308 residues: uncharacterized protein (308 aa).

A helical membrane pass occupies residues 191–211 (YLCLNLPYIIVALTLVPYSLV).

It is found in the host membrane. This is an uncharacterized protein from Saccharolobus islandicus (Sulfolobus islandicus).